The following is an 802-amino-acid chain: DEAD-box ATP-dependent RNA helicase 28 (802 aa).

Residues 1-179 (MDADFRFDPD…TDKKSGVVDP (179 aa)) are disordered. 2 stretches are compositionally biased toward acidic residues: residues 76–131 (GDSE…EELE) and 138–169 (KSDE…EEEE). Coiled coils occupy residues 90–122 (DSEE…GVEV) and 149–174 (QDGE…DKKS). The short motif at 194 to 222 (NSFLELNLSRPLLRACEALGYQKPTPIQA) is the Q motif element. The 175-residue stretch at 225–399 (IPLALTGRDI…TLSLNKPVRL (175 aa)) folds into the Helicase ATP-binding domain. 238–245 (AITGSGKT) is an ATP binding site. A DEAD box motif is present at residues 347–350 (DEAD). The region spanning 429 to 573 (VLLALCLKTF…SRIVAEKPVA (145 aa)) is the Helicase C-terminal domain. A coiled-coil region spans residues 572–616 (VAECAKLIEELEDQISTIIQEEREERILRKAEMEATKAENMIAHK). The tract at residues 639 to 802 (KAAKESTSQG…KSKSRYNRRK (164 aa)) is disordered. Residues 644–659 (STSQGKSNSGVISAQQ) are compositionally biased toward polar residues. The segment covering 666–684 (KEKKRREREKNLPRKKRRR) has biased composition (basic residues). Residues 671 to 712 (REREKNLPRKKRRRLEAEREMLEDESEDEEEAKESKGGKKEK) adopt a coiled-coil conformation. A compositionally biased stretch (acidic residues) spans 691-702 (MLEDESEDEEEA). Residues 776 to 802 (RSLKKNNVMRKKSKNSFKSKSRYNRRK) are compositionally biased toward basic residues.

It belongs to the DEAD box helicase family. DDX27/DRS1 subfamily.

The enzyme catalyses ATP + H2O = ADP + phosphate + H(+). This chain is DEAD-box ATP-dependent RNA helicase 28, found in Oryza sativa subsp. japonica (Rice).